Here is an 831-residue protein sequence, read N- to C-terminus: DNA ligase (831 aa).

Residues 34–38, 83–84, and glutamate 114 each bind NAD(+); these read DADYD and SL. The N6-AMP-lysine intermediate role is filled by lysine 116. 4 residues coordinate NAD(+): arginine 137, glutamate 174, lysine 291, and lysine 315. Zn(2+) contacts are provided by cysteine 409, cysteine 412, cysteine 427, and cysteine 433. Residues 749 to 831 enclose the BRCT domain; it reads AHTAPLNGQS…LAFLGQYSAQ (83 aa).

The protein belongs to the NAD-dependent DNA ligase family. LigA subfamily. It depends on Mg(2+) as a cofactor. Mn(2+) serves as cofactor.

It catalyses the reaction NAD(+) + (deoxyribonucleotide)n-3'-hydroxyl + 5'-phospho-(deoxyribonucleotide)m = (deoxyribonucleotide)n+m + AMP + beta-nicotinamide D-nucleotide.. In terms of biological role, DNA ligase that catalyzes the formation of phosphodiester linkages between 5'-phosphoryl and 3'-hydroxyl groups in double-stranded DNA using NAD as a coenzyme and as the energy source for the reaction. It is essential for DNA replication and repair of damaged DNA. The chain is DNA ligase from Xylella fastidiosa (strain 9a5c).